A 348-amino-acid chain; its full sequence is Peptide-N(4)-(N-acetyl-beta-glucosaminyl)asparagine amidase (348 aa).

Zn(2+) contacts are provided by Cys116, Cys119, Cys151, and Cys154. Cys177 acts as the Nucleophile in catalysis. Residues His204 and Asp221 contribute to the active site. Glu224 is a binding site for substrate. Residues 311–348 form a disordered region; the sequence is PSATPTKEMQKLKISKTGNKGRISGSAEWKESRGENGK. The segment covering 338-348 has biased composition (basic and acidic residues); sequence EWKESRGENGK.

The protein belongs to the transglutaminase-like superfamily. PNGase family. The cofactor is Zn(2+).

The protein localises to the cytoplasm. It carries out the reaction Hydrolysis of an N(4)-(acetyl-beta-D-glucosaminyl)asparagine residue in which the glucosamine residue may be further glycosylated, to yield a (substituted) N-acetyl-beta-D-glucosaminylamine and a peptide containing an aspartate residue.. Functionally, specifically deglycosylates the denatured form of N-linked glycoproteins in the cytoplasm and assists their proteasome-mediated degradation. Cleaves the beta-aspartyl-glucosamine (GlcNAc) of the glycan and the amide side chain of Asn, converting Asn to Asp. Prefers proteins containing high-mannose over those bearing complex type oligosaccharides. Can recognize misfolded proteins in the endoplasmic reticulum that are exported to the cytosol to be destroyed and deglycosylate them, while it has no activity toward native proteins. Deglycosylation is a prerequisite for subsequent proteasome-mediated degradation of some, but not all, misfolded glycoproteins. This chain is Peptide-N(4)-(N-acetyl-beta-glucosaminyl)asparagine amidase (PNG1), found in Candida glabrata (strain ATCC 2001 / BCRC 20586 / JCM 3761 / NBRC 0622 / NRRL Y-65 / CBS 138) (Yeast).